Consider the following 264-residue polypeptide: Thymidylate synthase (264 aa).

Arg21 lines the dUMP pocket. Residue His51 coordinates (6R)-5,10-methylene-5,6,7,8-tetrahydrofolate. Residue 126–127 (RR) participates in dUMP binding. The Nucleophile role is filled by Cys146. Residues 166–169 (RSGD), Asn177, and 207–209 (HIY) each bind dUMP. A (6R)-5,10-methylene-5,6,7,8-tetrahydrofolate-binding site is contributed by Asp169. Ala263 contributes to the (6R)-5,10-methylene-5,6,7,8-tetrahydrofolate binding site.

It belongs to the thymidylate synthase family. Bacterial-type ThyA subfamily. Homodimer.

It localises to the cytoplasm. The enzyme catalyses dUMP + (6R)-5,10-methylene-5,6,7,8-tetrahydrofolate = 7,8-dihydrofolate + dTMP. It participates in pyrimidine metabolism; dTTP biosynthesis. In terms of biological role, catalyzes the reductive methylation of 2'-deoxyuridine-5'-monophosphate (dUMP) to 2'-deoxythymidine-5'-monophosphate (dTMP) while utilizing 5,10-methylenetetrahydrofolate (mTHF) as the methyl donor and reductant in the reaction, yielding dihydrofolate (DHF) as a by-product. This enzymatic reaction provides an intracellular de novo source of dTMP, an essential precursor for DNA biosynthesis. The chain is Thymidylate synthase from Sinorhizobium medicae (strain WSM419) (Ensifer medicae).